The chain runs to 723 residues: Catalase-peroxidase (723 aa).

The tryptophyl-tyrosyl-methioninium (Trp-Tyr) (with M-251) cross-link spans 97–225; the sequence is WHAAGSYRVT…LAAVQMGLIY (129 aa). The active-site Proton acceptor is the H98. Positions 225–251 form a cross-link, tryptophyl-tyrosyl-methioninium (Tyr-Met) (with W-97); the sequence is YVNPEGVNGKSDPLATAAQMRETFARM. H266 is a heme b binding site.

It belongs to the peroxidase family. Peroxidase/catalase subfamily. Homodimer or homotetramer. It depends on heme b as a cofactor. In terms of processing, formation of the three residue Trp-Tyr-Met cross-link is important for the catalase, but not the peroxidase activity of the enzyme.

It carries out the reaction H2O2 + AH2 = A + 2 H2O. It catalyses the reaction 2 H2O2 = O2 + 2 H2O. Bifunctional enzyme with both catalase and broad-spectrum peroxidase activity. Involved in tumorigenesis. In Rhizobium radiobacter (Agrobacterium tumefaciens), this protein is Catalase-peroxidase.